Here is a 209-residue protein sequence, read N- to C-terminus: NADH-quinone oxidoreductase subunit C (209 aa).

It belongs to the complex I 30 kDa subunit family. As to quaternary structure, NDH-1 is composed of 14 different subunits. Subunits NuoB, C, D, E, F, and G constitute the peripheral sector of the complex.

It is found in the cell inner membrane. The enzyme catalyses a quinone + NADH + 5 H(+)(in) = a quinol + NAD(+) + 4 H(+)(out). Its function is as follows. NDH-1 shuttles electrons from NADH, via FMN and iron-sulfur (Fe-S) centers, to quinones in the respiratory chain. The immediate electron acceptor for the enzyme in this species is believed to be ubiquinone. Couples the redox reaction to proton translocation (for every two electrons transferred, four hydrogen ions are translocated across the cytoplasmic membrane), and thus conserves the redox energy in a proton gradient. The protein is NADH-quinone oxidoreductase subunit C of Phenylobacterium zucineum (strain HLK1).